Here is a 611-residue protein sequence, read N- to C-terminus: Inhibitor of apoptosis protein (611 aa).

BIR repeat units follow at residues 30 to 97 (ELYR…CSFV), 176 to 242 (EEAR…CPFV), and 262 to 329 (HEAR…CEYL). Zn(2+) contacts are provided by Cys-299, Cys-302, His-319, and Cys-326. A CARD domain is found at 446 to 536 (VASDDLSLIR…VLYKDLFVEK (91 aa)). The RING-type zinc-finger motif lies at 564–599 (CKVCMDKEVSIVFIPCGHLVVCKECAPSLRKCPICR).

It belongs to the IAP family. Cells of the T-lymphocyte lineage. Found in both cortical and medullary cells of the thymus. Expressed at relatively high levels also in spleen, bursa, intestine and lung and at very low levels in testis, brain and skeletal muscle.

It is found in the nucleus. Its subcellular location is the cytoplasm. In terms of biological role, apoptotic suppressor. This chain is Inhibitor of apoptosis protein (ITA), found in Gallus gallus (Chicken).